The sequence spans 73 residues: Putative membrane protein insertion efficiency factor (73 aa).

This sequence belongs to the UPF0161 family.

Its subcellular location is the cell inner membrane. Its function is as follows. Could be involved in insertion of integral membrane proteins into the membrane. This is Putative membrane protein insertion efficiency factor from Neisseria meningitidis serogroup C / serotype 2a (strain ATCC 700532 / DSM 15464 / FAM18).